Reading from the N-terminus, the 917-residue chain is Smoothelin (917 aa).

An N-acetylalanine modification is found at A2. The stretch at 24 to 89 forms a coiled coil; it reads LAERRRIRSA…ARLAGQLESM (66 aa). The interval 157-456 is disordered; the sequence is EVPEREEQEQ…AVGTAEPGGS (300 aa). Polar residues predominate over residues 177–188; sequence PEGTSQDVTTVT. 2 stretches are compositionally biased toward low complexity: residues 193-210 and 220-232; these read APPG…SSPT and PAEA…EVPG. Positions 233–243 are enriched in pro residues; that stretch reads SPEPPPSPPKT. Positions 244–258 are enriched in low complexity; the sequence is TSPEPQESPTLPSTE. A compositionally biased stretch (polar residues) spans 298–326; sequence RSLSVLSPRQPAQNRESTPLASGPSSFQR. S299, S301, and S304 each carry phosphoserine. The segment covering 329 to 338 has biased composition (basic and acidic residues); the sequence is SVRDRVHKFT. S341 bears the Phosphoserine mark. T351 is subject to Phosphothreonine. S357 is subject to Phosphoserine. 2 positions are modified to phosphothreonine: T360 and T373. Residues 363–392 are compositionally biased toward low complexity; sequence RLLGPSLTSTTPASSSSGSSSRGPSDTSSR. Phosphoserine occurs at positions 503, 514, 523, and 576. 2 disordered regions span residues 560-580 and 617-767; these read ANGA…PLSA and QRKR…RKAM. Positions 603 to 630 form a coiled coil; it reads EERKLIRAALRELRQRKRDQRDKERERR. Positions 617-640 are enriched in basic and acidic residues; sequence QRKRDQRDKERERRLQEARGRPGE. A compositionally biased stretch (polar residues) spans 676–689; sequence NDGTRTARTTTVES. The span at 701–720 shows a compositional bias: low complexity; that stretch reads STMMQTKTFSSSSSSKKMGS. S729 is subject to Phosphoserine. A compositionally biased stretch (basic and acidic residues) spans 738–750; that stretch reads LEKRQAEKKKELM. S792 is modified (phosphoserine). A Calponin-homology (CH) domain is found at 799–906; the sequence is NSIKQMLLDW…YVQSLYNHLR (108 aa).

It belongs to the smoothelin family. Smooth muscle; contractile or vascular (for the long form).

The protein localises to the cytoplasm. It localises to the cytoskeleton. Functionally, structural protein of the cytoskeleton. The sequence is that of Smoothelin (SMTN) from Homo sapiens (Human).